The primary structure comprises 72 residues: Crustacean hyperglycemic hormone B (72 aa).

Glutamine 1 carries the pyrrolidone carboxylic acid modification. A D-phenylalanine; in form CHHB-II modification is found at phenylalanine 3. Disulfide bonds link cysteine 7–cysteine 43, cysteine 23–cysteine 39, and cysteine 26–cysteine 52. Valine amide is present on valine 72.

In terms of processing, stereoinversion of L-Phe (in CHHB-I) to D-Phe (in CHHB-II).

Its subcellular location is the secreted. Its function is as follows. Hormone found in the sinus gland of isopods and decapods which controls the blood sugar level. Has a secretagogue action over the amylase released from the midgut gland. May act as a stress hormone and may be involved in the control of molting and reproduction. The sequence is that of Crustacean hyperglycemic hormone B from Cherax destructor (Common yabby crayfish).